The sequence spans 243 residues: Cell division protein ZipA (243 aa).

Topologically, residues 1 to 4 (MSDV) are periplasmic. Residues 5–25 (TLLRIGIAIVGILFVAAVFFF) form a helical membrane-spanning segment. At 26–243 (STPKTSAHRV…VPPLIKNSRW (218 aa)) the chain is on the cytoplasmic side. The tract at residues 32–89 (AHRVRTKKEEPPRERREPMLSTEADNSPPQGVDEVPASVSQQQVNPEANKPGEVQLGK) is disordered. Residues 38 to 49 (KKEEPPRERREP) show a composition bias toward basic and acidic residues.

This sequence belongs to the ZipA family. As to quaternary structure, interacts with FtsZ via their C-terminal domains.

Its subcellular location is the cell inner membrane. Functionally, essential cell division protein that stabilizes the FtsZ protofilaments by cross-linking them and that serves as a cytoplasmic membrane anchor for the Z ring. Also required for the recruitment to the septal ring of downstream cell division proteins. This is Cell division protein ZipA from Xylella fastidiosa (strain 9a5c).